Consider the following 36-residue polypeptide: Lambda-hexatoxin-Hv1a (36 aa).

4 cysteine pairs are disulfide-bonded: Cys-3–Cys-17, Cys-10–Cys-22, Cys-13–Cys-14, and Cys-16–Cys-33.

Belongs to the neurotoxin 11 (kappa toxin) family. In terms of tissue distribution, expressed by the venom gland.

It localises to the secreted. Functionally, this excitatory toxin inhibits insect calcium-activated potassium (KCa) channels (Slo-type). This Hadronyche versuta (Blue mountains funnel-web spider) protein is Lambda-hexatoxin-Hv1a.